The sequence spans 1203 residues: DNA-directed RNA polymerase subunit beta (1203 aa).

The span at 1174–1195 (AAQEAKAAFEAEEAEKATKAEA) shows a compositional bias: basic and acidic residues. The disordered stretch occupies residues 1174 to 1203 (AAQEAKAAFEAEEAEKATKAEATEEAAEQE).

It belongs to the RNA polymerase beta chain family. In terms of assembly, the RNAP catalytic core consists of 2 alpha, 1 beta, 1 beta' and 1 omega subunit. When a sigma factor is associated with the core the holoenzyme is formed, which can initiate transcription.

The enzyme catalyses RNA(n) + a ribonucleoside 5'-triphosphate = RNA(n+1) + diphosphate. Functionally, DNA-dependent RNA polymerase catalyzes the transcription of DNA into RNA using the four ribonucleoside triphosphates as substrates. This chain is DNA-directed RNA polymerase subunit beta, found in Streptococcus pneumoniae (strain P1031).